Here is a 387-residue protein sequence, read N- to C-terminus: 3-ketoacyl-CoA thiolase (387 aa).

The active-site Acyl-thioester intermediate is the Cys-91. Residues His-343 and Cys-373 each act as proton acceptor in the active site.

The protein belongs to the thiolase-like superfamily. Thiolase family. In terms of assembly, heterotetramer of two alpha chains (FadB) and two beta chains (FadA).

It is found in the cytoplasm. It catalyses the reaction an acyl-CoA + acetyl-CoA = a 3-oxoacyl-CoA + CoA. The protein operates within lipid metabolism; fatty acid beta-oxidation. Functionally, catalyzes the final step of fatty acid oxidation in which acetyl-CoA is released and the CoA ester of a fatty acid two carbons shorter is formed. This chain is 3-ketoacyl-CoA thiolase, found in Vibrio cholerae serotype O1 (strain ATCC 39541 / Classical Ogawa 395 / O395).